The sequence spans 279 residues: Shikimate dehydrogenase (NADP(+)) (279 aa).

Shikimate-binding positions include 20–22 and Thr-67; that span reads SRS. Lys-71 serves as the catalytic Proton acceptor. Asp-83 serves as a coordination point for NADP(+). Positions 92 and 108 each coordinate shikimate. Residues 134–138 and Leu-223 contribute to the NADP(+) site; that span reads GAGGA. Tyr-225 is a shikimate binding site. Gly-246 contacts NADP(+).

Belongs to the shikimate dehydrogenase family. As to quaternary structure, homodimer.

It catalyses the reaction shikimate + NADP(+) = 3-dehydroshikimate + NADPH + H(+). It functions in the pathway metabolic intermediate biosynthesis; chorismate biosynthesis; chorismate from D-erythrose 4-phosphate and phosphoenolpyruvate: step 4/7. Its function is as follows. Involved in the biosynthesis of the chorismate, which leads to the biosynthesis of aromatic amino acids. Catalyzes the reversible NADPH linked reduction of 3-dehydroshikimate (DHSA) to yield shikimate (SA). This is Shikimate dehydrogenase (NADP(+)) from Cereibacter sphaeroides (strain ATCC 17023 / DSM 158 / JCM 6121 / CCUG 31486 / LMG 2827 / NBRC 12203 / NCIMB 8253 / ATH 2.4.1.) (Rhodobacter sphaeroides).